Reading from the N-terminus, the 384-residue chain is Putative 8-amino-7-oxononanoate synthase (384 aa).

Substrate is bound at residue Arg-18. 105–106 (GY) is a binding site for pyridoxal 5'-phosphate. His-130 is a substrate binding site. Residues Ser-176, 201–204 (DDAH), and 233–236 (TLSK) contribute to the pyridoxal 5'-phosphate site. Lys-236 is modified (N6-(pyridoxal phosphate)lysine). Thr-349 is a substrate binding site.

Belongs to the class-II pyridoxal-phosphate-dependent aminotransferase family. BioF subfamily. As to quaternary structure, homodimer. Requires pyridoxal 5'-phosphate as cofactor.

The catalysed reaction is 6-carboxyhexanoyl-[ACP] + L-alanine + H(+) = (8S)-8-amino-7-oxononanoate + holo-[ACP] + CO2. It functions in the pathway cofactor biosynthesis; biotin biosynthesis. Its function is as follows. Catalyzes the decarboxylative condensation of pimeloyl-[acyl-carrier protein] and L-alanine to produce 8-amino-7-oxononanoate (AON), [acyl-carrier protein], and carbon dioxide. This chain is Putative 8-amino-7-oxononanoate synthase (bioF), found in Desulfovibrio desulfuricans (strain ATCC 27774 / DSM 6949 / MB).